The sequence spans 427 residues: Zinc-finger homeodomain protein 7 (427 aa).

2 disordered regions span residues 1–60 and 91–118; these read MEYK…SLMD and LHAAHHHGQGRRVEAPGGESQHHLQRHH. The segment covering 10–28 has biased composition (acidic residues); it reads EEEEEEEEEEDDEEEDEEE. A compositionally biased stretch (low complexity) spans 50–60; it reads SSASSPSSLMD. The ZF-HD dimerization-type; degenerate zinc-finger motif lies at 163-211; that stretch reads YRECLKNHAARMGAHVLDGCGEFMSSPGDGAAALACAACGCHRSFHRRE. 2 disordered regions span residues 264 to 320 and 375 to 427; these read KRPP…SKKR and HLAK…QHDA. Composition is skewed to low complexity over residues 271-283 and 301-312; these read VSPASAPAALAES and HAAAVVAASASA. Residues 318–381 constitute a DNA-binding region (homeobox); it reads KKRFRTKFTA…NNKHLAKTPP (64 aa). The segment covering 380-401 has biased composition (pro residues); that stretch reads PPSPTSQPPPPPLHHDPSPPPP. Residues 402–416 are compositionally biased toward basic residues; sequence PHHHHHHHHHHHPPQ. The segment covering 417–427 has biased composition (low complexity); that stretch reads HHQQQQQQHDA.

In terms of assembly, homo- and heterodimer with other ZFHD proteins.

It localises to the nucleus. Its function is as follows. Putative transcription factor. The chain is Zinc-finger homeodomain protein 7 (ZHD7) from Oryza sativa subsp. japonica (Rice).